The primary structure comprises 304 residues: Porphobilinogen deaminase (304 aa).

At Cys-240 the chain carries S-(dipyrrolylmethanemethyl)cysteine.

The protein belongs to the HMBS family. Monomer. Dipyrromethane is required as a cofactor.

The enzyme catalyses 4 porphobilinogen + H2O = hydroxymethylbilane + 4 NH4(+). Its pathway is porphyrin-containing compound metabolism; protoporphyrin-IX biosynthesis; coproporphyrinogen-III from 5-aminolevulinate: step 2/4. Its function is as follows. Tetrapolymerization of the monopyrrole PBG into the hydroxymethylbilane pre-uroporphyrinogen in several discrete steps. In Xanthomonas oryzae pv. oryzae (strain MAFF 311018), this protein is Porphobilinogen deaminase.